We begin with the raw amino-acid sequence, 89 residues long: Small ribosomal subunit protein uS14A (89 aa).

It belongs to the universal ribosomal protein uS14 family. As to quaternary structure, part of the 30S ribosomal subunit. Contacts proteins S3 and S10.

Binds 16S rRNA, required for the assembly of 30S particles and may also be responsible for determining the conformation of the 16S rRNA at the A site. This is Small ribosomal subunit protein uS14A from Bacillus licheniformis (strain ATCC 14580 / DSM 13 / JCM 2505 / CCUG 7422 / NBRC 12200 / NCIMB 9375 / NCTC 10341 / NRRL NRS-1264 / Gibson 46).